The primary structure comprises 561 residues: Cytochrome P450 monooxygenase iboC (561 aa).

A helical transmembrane segment spans residues 8 to 28 (RFYYQLLAAVLIPALFVAWAA). Cys-484 serves as a coordination point for heme.

The protein belongs to the cytochrome P450 family. It depends on heme as a cofactor.

Its subcellular location is the membrane. Its pathway is secondary metabolite biosynthesis. Its function is as follows. Cytochrome P450 monooxygenase; part of the gene cluster that mediates the biosynthesis of the psychoactive metabolites ibotenic acid and muscimol. The first committed step is glutamate hydroxylation by the 2-oxoglutarate-dependent dioxygenase iboH, and the last step is decarboxylation of ibotenic acid to muscimol by the decarboxylase iboD. The order of the intermediate reactions is somewhat ambiguous. IboA likely activates the carboxylic acid at position 5 to introduce an amide bond, and the flavin monooxygenase iboF generates the N-O bond. There are several options for the latter step. One option is that iboF directly hydroxylates the amide nitrogen formed by iboA to produce a hydroxamic acid species. Another option is that iboF hydroxylates an external N-containing compound, whose resulting N-O bond is subsequently introduced into the hydroxyglutamate scaffold. The paralogous PLP-dependent cystathionine gamma-synthase-like enzymes iboG1 and iboG2 are likely involved in substitution of the OH group at position 3 by the O-N moiety. The first cyclic intermediate is most probably tricholomic acid which is likely desaturated to ibotenic acid by the cytochrome P450 monooxygenase iboC. In Amanita muscaria (strain Koide BX008), this protein is Cytochrome P450 monooxygenase iboC.